We begin with the raw amino-acid sequence, 186 residues long: MKTAHEVRPGNVIMFEGSPWVVQKTETTRSGRNAAIVKLKLKNLLLNSGTETTFKGEDKIDDIILDRLDCTYSYFADPMYVFMDAEYNQYDVEAENLGDAAAYIVDGMEETCQVTFYDGKAISVEMPTTIVREVIYTEPSARGDTSGKVMKPATITGGGTISVADFVKVGDKIEIDTRTGEFKKRV.

N-alpha-linked (Rha) arginine glycosylation occurs at Arg-32.

It belongs to the elongation factor P family. Glycosylated ar Arg-32 by EarP: arginine rhamnosylation is required for EF-P function and rescue of polyproline stalled ribosomes.

It localises to the cytoplasm. It functions in the pathway protein biosynthesis; polypeptide chain elongation. Its function is as follows. Involved in peptide bond synthesis. Stimulates efficient translation and peptide-bond synthesis on native or reconstituted 70S ribosomes in vitro. Probably functions indirectly by altering the affinity of the ribosome for aminoacyl-tRNA, thus increasing their reactivity as acceptors for peptidyl transferase. The chain is Elongation factor P from Shewanella oneidensis (strain ATCC 700550 / JCM 31522 / CIP 106686 / LMG 19005 / NCIMB 14063 / MR-1).